Consider the following 191-residue polypeptide: ATP-dependent Clp protease proteolytic subunit 1 (191 aa).

The active-site Nucleophile is the S91. H116 is an active-site residue.

The protein belongs to the peptidase S14 family. In terms of assembly, fourteen ClpP subunits assemble into 2 heptameric rings which stack back to back to give a disk-like structure with a central cavity, resembling the structure of eukaryotic proteasomes.

Its subcellular location is the cytoplasm. It carries out the reaction Hydrolysis of proteins to small peptides in the presence of ATP and magnesium. alpha-casein is the usual test substrate. In the absence of ATP, only oligopeptides shorter than five residues are hydrolyzed (such as succinyl-Leu-Tyr-|-NHMec, and Leu-Tyr-Leu-|-Tyr-Trp, in which cleavage of the -Tyr-|-Leu- and -Tyr-|-Trp bonds also occurs).. In terms of biological role, cleaves peptides in various proteins in a process that requires ATP hydrolysis. Has a chymotrypsin-like activity. Plays a major role in the degradation of misfolded proteins. This Chlamydia caviae (strain ATCC VR-813 / DSM 19441 / 03DC25 / GPIC) (Chlamydophila caviae) protein is ATP-dependent Clp protease proteolytic subunit 1.